A 118-amino-acid polypeptide reads, in one-letter code: MANYRGGRINEEFKREISNLIQNEVKDPRLTAMISVTDVKVTKDLRYAKVYVSIFSKDDEEKKNNLEALKNASGFIRKSVGQKINLRHTPEIIIELDDSINYGMHMDELIQRISKGNE.

It belongs to the RbfA family. In terms of assembly, monomer. Binds 30S ribosomal subunits, but not 50S ribosomal subunits or 70S ribosomes.

Its subcellular location is the cytoplasm. In terms of biological role, one of several proteins that assist in the late maturation steps of the functional core of the 30S ribosomal subunit. Associates with free 30S ribosomal subunits (but not with 30S subunits that are part of 70S ribosomes or polysomes). Required for efficient processing of 16S rRNA. May interact with the 5'-terminal helix region of 16S rRNA. This Clostridium beijerinckii (strain ATCC 51743 / NCIMB 8052) (Clostridium acetobutylicum) protein is Ribosome-binding factor A.